We begin with the raw amino-acid sequence, 201 residues long: Recombination protein RecR (201 aa).

The C4-type zinc-finger motif lies at 57-72; sequence CADCRTFTEQEVCNIC. The Toprim domain occupies 81–176; it reads GQICVVESPA…EASRIAHGVP (96 aa).

Belongs to the RecR family.

In terms of biological role, may play a role in DNA repair. It seems to be involved in an RecBC-independent recombinational process of DNA repair. It may act with RecF and RecO. In Shigella boydii serotype 4 (strain Sb227), this protein is Recombination protein RecR.